The primary structure comprises 42 residues: Photosystem I reaction center subunit IX (42 aa).

A helical membrane pass occupies residues 7–27 (YLSTAPVIATIWFGFLAGLLI).

Belongs to the PsaJ family.

Its subcellular location is the plastid. The protein resides in the chloroplast thylakoid membrane. May help in the organization of the PsaE and PsaF subunits. The chain is Photosystem I reaction center subunit IX from Chaetosphaeridium globosum (Charophycean green alga).